The following is a 568-amino-acid chain: Zinc finger protein 768 (568 aa).

Positions 1-16 are enriched in basic and acidic residues; sequence MEREASSWGLESRDVH. Disordered regions lie at residues 1 to 223, 228 to 247, and 264 to 287; these read MERE…SLGV, SFTQGFGEQPTGALPPFDMP, and LNLTGTLRGPGRRGGRARGGQGPR. Phosphoserine is present on residues Ser17, Ser23, and Ser27. Position 35 is a phosphothreonine (Thr35). Ser36, Ser65, Ser72, Ser79, Ser86, Ser93, Ser100, Ser107, Ser114, Ser121, Ser128, Ser135, and Ser149 each carry phosphoserine. Positions 62-80 are enriched in low complexity; the sequence is EPQSPEFEPQSPEFESQSP. Residues 110–122 show a composition bias toward polar residues; it reads SDPQSPEFESQSP. Tyr152 carries the post-translational modification Phosphotyrosine. Residue Ser154 is modified to Phosphoserine. The segment covering 159–186 has biased composition (polar residues); sequence FESQSPGYESQSPGYEPQNSGDGVQNSE. Thr189 bears the Phosphothreonine mark. A Phosphoserine modification is found at Ser191. Residues 289 to 311 form a C2H2-type 1 zinc finger; it reads NICGICGKSFGRGSTLIQHQRIH. Thr312 is subject to Phosphothreonine. The residue at position 317 (Tyr317) is a Phosphotyrosine. 4 C2H2-type zinc fingers span residues 317–339, 345–367, 373–395, and 401–423; these read YKCEVCSKAFSQSSDLIKHQRTH, YKCPRCGKAFADSSYLLRHQRTH, YKCPHCGKAFGDSSYLLRHQRTH, and YSCPECGKCYSQNSSLRSHQRVH. Ser323 and Ser327 each carry phosphoserine. Residue Thr424 is modified to Phosphothreonine. C2H2-type zinc fingers lie at residues 429-451, 457-479, 485-507, 513-535, and 541-563; these read FSCGICGKSFSQRSALIPHARSH, FKCPECGKRFGQSSVLAIHARTH, YSCPDCGKTFNRSSTLIQHQRSH, YRCAVCGKGFCRSSTLLQHHRVH, and YKCDDCGKAFSQSSDLIRHQRTH. A Phosphoserine modification is found at Ser470.

The protein belongs to the krueppel C2H2-type zinc-finger protein family. As to quaternary structure, interacts (via zinc-finger domains) with TP53 (via N-terminus); interaction might be facilitated by TP53 oligomerization state. Interacts with ELP3. May be phosphorylated at residue 'Ser-5' of the tandem heptapeptide repeats in the N-terminus. Phosphorylation might be increased upon RAS pathway activation and negatively regulate protein stability.

It localises to the nucleus. It is found in the chromosome. Functionally, binds to mammalian-wide interspersed repeat (MIRs) sequences in euchromatin and promoter regions of genes at the consensus sequence 5'-GCTGTGTG-[N20]-CCTCTCTG-3', consisting of two anchor regions connected by a linker region; the linker region probably does not contribute to the binding specificity. Required for cell homeostasis. May be involved in transcriptional regulation. The polypeptide is Zinc finger protein 768 (Znf768) (Mus musculus (Mouse)).